A 396-amino-acid chain; its full sequence is Phosphopentomutase (396 aa).

Mn(2+)-binding residues include Asp13, Asp288, His293, Asp329, His330, and His341.

Belongs to the phosphopentomutase family. The cofactor is Mn(2+).

It localises to the cytoplasm. It catalyses the reaction 2-deoxy-alpha-D-ribose 1-phosphate = 2-deoxy-D-ribose 5-phosphate. The catalysed reaction is alpha-D-ribose 1-phosphate = D-ribose 5-phosphate. It functions in the pathway carbohydrate degradation; 2-deoxy-D-ribose 1-phosphate degradation; D-glyceraldehyde 3-phosphate and acetaldehyde from 2-deoxy-alpha-D-ribose 1-phosphate: step 1/2. Functionally, isomerase that catalyzes the conversion of deoxy-ribose 1-phosphate (dRib-1-P) and ribose 1-phosphate (Rib-1-P) to deoxy-ribose 5-phosphate (dRib-5-P) and ribose 5-phosphate (Rib-5-P), respectively. In Clostridium perfringens (strain 13 / Type A), this protein is Phosphopentomutase.